The following is a 409-amino-acid chain: Chaetoglobosin A biosynthesis cluster protein C (409 aa).

Residues 51 to 120 enclose the HTH CENPB-type domain; that stretch reads DLPANSRKLT…VKRQPQLRTR (70 aa). A DNA-binding region (H-T-H motif) is located at residues 84 to 113; the sequence is RGVEDMANHLLRERDAPPVGKLWAHNFVKR. Disordered stretches follow at residues 243–269 and 320–350; these read PTHP…ETRS and ANEP…QDPL. Residues 255–269 are compositionally biased toward polar residues; it reads PWASKTPYNAQETRS.

The protein resides in the nucleus. In terms of biological role, part of the gene cluster that mediates the biosynthesis of chaetoglobosin A which has a unique inhibitory activity against actin polymerization in mammalian cells. Chaetoglobosin A and its intermediates are involved in the morphological differentiation of C.globosum. The first step of the pathway is the synthesis of prochaetoglobosin I via condensation of one acetyl-CoA, 8 malonyl-CoA, and a L-tryptophan molecule by the PKS-NRPS hybrid synthetase cheA, followed by reduction of backbone double bond to install desired geometry by the enoyl reductase cheB. Further multiple oxidation steps performed by the cytochrome P450 monooxygenases cheE and cheG, as well as by the FAD-linked oxidoreductase cheF, lead to the formation of chaetoglobosin A. Depending on the order of action of these reductases, distinct intermediates can be identified. Within the pathway, the cytochrome P450 monooxygenase cheE catalyzes a stereospecific epoxidation on prochaetoglobosin I, cytoglobosin D, and chaetoglobosin J intermediates. The FAD-linked oxidoreductase cheF performs dehydrogenation of the C-20 hydroxyl groups in the 20-dihyrochaetoglobosin A and cytoglobosin D intermediates. Finally, the cytochrome P450 monooxygenase cheG can catalyze the stereospecific dihydroxylation of prochaetoglobosin I and prochaetoglobosin IV at C-19 and C-20, respectively. The Diels-Alderase cheD may play a role in the post-PKS-NRPS biosynthetic steps catalyzing Diels-Alder cyclization. This is Chaetoglobosin A biosynthesis cluster protein C from Chaetomium globosum (strain ATCC 6205 / CBS 148.51 / DSM 1962 / NBRC 6347 / NRRL 1970) (Soil fungus).